The following is a 600-amino-acid chain: Glutamine--fructose-6-phosphate aminotransferase [isomerizing] (600 aa).

Cysteine 2 (nucleophile; for GATase activity) is an active-site residue. The 216-residue stretch at 2-217 (CGIVGFIGEQ…DKEIVIVTKE (216 aa)) folds into the Glutamine amidotransferase type-2 domain. 2 consecutive SIS domains span residues 283–422 (IRNA…AKGE) and 452–590 (LAKQ…VDKP). The active-site For Fru-6P isomerization activity is lysine 595.

As to quaternary structure, homodimer.

It is found in the cytoplasm. The enzyme catalyses D-fructose 6-phosphate + L-glutamine = D-glucosamine 6-phosphate + L-glutamate. In terms of biological role, catalyzes the first step in hexosamine metabolism, converting fructose-6P into glucosamine-6P using glutamine as a nitrogen source. This is Glutamine--fructose-6-phosphate aminotransferase [isomerizing] from Bacillus cereus (strain ATCC 10987 / NRS 248).